A 191-amino-acid polypeptide reads, in one-letter code: Small ribosomal subunit protein eS7y (191 aa).

Methionine 1 is modified (N-acetylmethionine). Positions 17–50 (TEFEEQVTQALFDLENTNQELKSELKDLYINQAV) form a coiled coil.

Belongs to the eukaryotic ribosomal protein eS7 family.

This is Small ribosomal subunit protein eS7y (RPS7B) from Arabidopsis thaliana (Mouse-ear cress).